The sequence spans 485 residues: Amyloid beta A4 precursor protein-binding family B member 1-interacting protein (485 aa).

Residues 84–107 (QAQKTSGNQQSVVTQPSTGTNNDF) are compositionally biased toward polar residues. The disordered stretch occupies residues 84–157 (QAQKTSGNQQ…LSQEEQEARA (74 aa)). A compositionally biased stretch (pro residues) spans 125–147 (LPPPPPAPDLDLPPPPPPPPPEP). Positions 175–262 (KKLVVKVHMY…KVLFLEKKEK (88 aa)) constitute a Ras-associating domain. The region spanning 305-414 (VPELEGALYL…WVTGIRIAKY (110 aa)) is the PH domain.

The protein belongs to the MRL family.

Its subcellular location is the cell membrane. The protein resides in the cytoplasm. It localises to the cytoskeleton. In terms of biological role, appears to function in the signal transduction from Ras activation to actin cytoskeletal remodeling. This is Amyloid beta A4 precursor protein-binding family B member 1-interacting protein (APBB1IP) from Gallus gallus (Chicken).